The primary structure comprises 441 residues: Glutamate--tRNA ligase 2 (441 aa).

Positions 6–16 (PSPTGDMHIGN) match the 'HIGH' region motif. The short motif at 231 to 235 (KMSKR) is the 'KMSKS' region element. Residue Lys234 coordinates ATP.

The protein belongs to the class-I aminoacyl-tRNA synthetase family. Glutamate--tRNA ligase type 1 subfamily. In terms of assembly, monomer.

It localises to the cytoplasm. The catalysed reaction is tRNA(Glu) + L-glutamate + ATP = L-glutamyl-tRNA(Glu) + AMP + diphosphate. Catalyzes the attachment of glutamate to tRNA(Glu) in a two-step reaction: glutamate is first activated by ATP to form Glu-AMP and then transferred to the acceptor end of tRNA(Glu). This Helicobacter hepaticus (strain ATCC 51449 / 3B1) protein is Glutamate--tRNA ligase 2.